The chain runs to 68 residues: ATP synthase F(0) complex subunit 8 (68 aa).

The chain crosses the membrane as a helical span at residues 8-24 (VWPTMIAPMLLTLFLIT). An N6-acetyllysine; alternate modification is found at lysine 54. Lysine 54 bears the N6-succinyllysine; alternate mark. Lysine 57 is modified (N6-acetyllysine).

Belongs to the ATPase protein 8 family. In terms of assembly, component of the ATP synthase complex composed at least of ATP5F1A/subunit alpha, ATP5F1B/subunit beta, ATP5MC1/subunit c (homooctomer), MT-ATP6/subunit a, MT-ATP8/subunit 8, ATP5ME/subunit e, ATP5MF/subunit f, ATP5MG/subunit g, ATP5MK/subunit k, ATP5MJ/subunit j, ATP5F1C/subunit gamma, ATP5F1D/subunit delta, ATP5F1E/subunit epsilon, ATP5PF/subunit F6, ATP5PB/subunit b, ATP5PD/subunit d, ATP5PO/subunit OSCP. ATP synthase complex consists of a soluble F(1) head domain (subunits alpha(3) and beta(3)) - the catalytic core - and a membrane F(0) domain - the membrane proton channel (subunits c, a, 8, e, f, g, k and j). These two domains are linked by a central stalk (subunits gamma, delta, and epsilon) rotating inside the F1 region and a stationary peripheral stalk (subunits F6, b, d, and OSCP). Interacts with PRICKLE3.

The protein resides in the mitochondrion membrane. In terms of biological role, subunit 8, of the mitochondrial membrane ATP synthase complex (F(1)F(0) ATP synthase or Complex V) that produces ATP from ADP in the presence of a proton gradient across the membrane which is generated by electron transport complexes of the respiratory chain. ATP synthase complex consist of a soluble F(1) head domain - the catalytic core - and a membrane F(1) domain - the membrane proton channel. These two domains are linked by a central stalk rotating inside the F(1) region and a stationary peripheral stalk. During catalysis, ATP synthesis in the catalytic domain of F(1) is coupled via a rotary mechanism of the central stalk subunits to proton translocation. In vivo, can only synthesize ATP although its ATP hydrolase activity can be activated artificially in vitro. Part of the complex F(0) domain. The chain is ATP synthase F(0) complex subunit 8 from Gorilla gorilla gorilla (Western lowland gorilla).